Reading from the N-terminus, the 267-residue chain is Cytokinesis defective protein 7 (267 aa).

Residues 244 to 267 (RNQADQSILPPSGDQQHHRSELHA) form a disordered region. Positions 258-267 (QQHHRSELHA) are enriched in basic and acidic residues.

This is Cytokinesis defective protein 7 from Caenorhabditis elegans.